We begin with the raw amino-acid sequence, 774 residues long: Probable ubiquitin-like-specific protease 2A (774 aa).

The tract at residues 118-141 (SSLSENDEVSTGEATNPASDPHEV) is disordered. Active-site residues include H400, D430, and C485. The tract at residues 548-568 (ILPANSKSEPPHCGVSNRNDQ) is disordered.

It belongs to the peptidase C48 family.

In terms of biological role, protease that catalyzes two essential functions in the SUMO pathway: processing of full-length SUMOs to their mature forms and deconjugation of SUMO from targeted proteins. In Arabidopsis thaliana (Mouse-ear cress), this protein is Probable ubiquitin-like-specific protease 2A (ULP2A).